Consider the following 100-residue polypeptide: NADH-quinone oxidoreductase subunit K (100 aa).

Transmembrane regions (helical) follow at residues 4–24, 28–48, and 60–80; these read TTWVIILSFLLFAIGTFGLLS, LLFILLSLEIMLNGIILLFIA, and IMYLLVLTLAASEVAVGLALV.

The protein belongs to the complex I subunit 4L family. As to quaternary structure, NDH-1 is composed of 13 different subunits. Subunits NuoA, H, J, K, L, M, N constitute the membrane sector of the complex.

Its subcellular location is the cell inner membrane. The catalysed reaction is a quinone + NADH + 5 H(+)(in) = a quinol + NAD(+) + 4 H(+)(out). NDH-1 shuttles electrons from NADH, via FMN and iron-sulfur (Fe-S) centers, to quinones in the respiratory chain. The immediate electron acceptor for the enzyme in this species is believed to be ubiquinone. Couples the redox reaction to proton translocation (for every two electrons transferred, four hydrogen ions are translocated across the cytoplasmic membrane), and thus conserves the redox energy in a proton gradient. This Shewanella woodyi (strain ATCC 51908 / MS32) protein is NADH-quinone oxidoreductase subunit K.